The following is a 212-amino-acid chain: Bilin biosynthesis protein PecF (212 aa).

Belongs to the CpcE/RpcE/PecE family.

Its function is as follows. An enzyme involved in the biosynthesis of bilin. This is Bilin biosynthesis protein PecF (pecF) from Mastigocladus laminosus (Fischerella sp.).